A 361-amino-acid polypeptide reads, in one-letter code: D-alanine--D-alanine ligase (361 aa).

The 207-residue stretch at 144 to 350 (KLAAADAGLA…FMELTDRLIR (207 aa)) folds into the ATP-grasp domain. An ATP-binding site is contributed by 177 to 232 (VASLSFPMFVKPVSLGSSVGITKVNSESELAEAITHACSLDSKVLIEQAVKGREVE). Residues Asp-303, Glu-317, and Asn-319 each contribute to the Mg(2+) site.

This sequence belongs to the D-alanine--D-alanine ligase family. The cofactor is Mg(2+). Requires Mn(2+) as cofactor.

The protein resides in the cytoplasm. The enzyme catalyses 2 D-alanine + ATP = D-alanyl-D-alanine + ADP + phosphate + H(+). It functions in the pathway cell wall biogenesis; peptidoglycan biosynthesis. Its function is as follows. Cell wall formation. The chain is D-alanine--D-alanine ligase from Chlorobium luteolum (strain DSM 273 / BCRC 81028 / 2530) (Pelodictyon luteolum).